A 523-amino-acid polypeptide reads, in one-letter code: Succinate-semialdehyde dehydrogenase, mitochondrial (523 aa).

The N-terminal 35 residues, 1-35, are a transit peptide targeting the mitochondrion; it reads MATCFLLRSFWAARPALPPPGRFRPEPAGTPRRSY. At Lys74 the chain carries N6-acetyllysine. Lys114 is subject to N6-acetyllysine; alternate. Lys114 bears the N6-succinyllysine; alternate mark. Residue Lys123 is modified to N6-succinyllysine. Position 128 is an N6-acetyllysine (Lys128). Lys172 carries the N6-succinyllysine modification. NAD(+) contacts are provided by residues Arg201 and 216–219; that span reads KPAE. Substrate is bound at residue Arg201. An N6-acetyllysine; alternate modification is found at Lys253. Lys253 carries the post-translational modification N6-succinyllysine; alternate. 272 to 277 contacts NAD(+); the sequence is GSTATG. The active-site Proton acceptor is the Glu294. Arg322 serves as a coordination point for substrate. The Nucleophile role is filled by Cys328. A disulfide bridge links Cys328 with Cys330. Lys347 carries the post-translational modification N6-acetyllysine; alternate. Lys347 carries the post-translational modification N6-succinyllysine; alternate. Lys353 bears the N6-acetyllysine mark. At Lys390 the chain carries N6-succinyllysine. Lys399 carries the N6-acetyllysine modification. At Ser403 the chain carries Phosphoserine. Ser486 serves as a coordination point for substrate. Ser487 is subject to Phosphoserine.

It belongs to the aldehyde dehydrogenase family. As to quaternary structure, homotetramer.

It localises to the mitochondrion. It carries out the reaction succinate semialdehyde + NAD(+) + H2O = succinate + NADH + 2 H(+). It participates in amino-acid degradation; 4-aminobutanoate degradation. Redox-regulated. Inhibited under oxydizing conditions. In terms of biological role, catalyzes one step in the degradation of the inhibitory neurotransmitter gamma-aminobutyric acid (GABA). The polypeptide is Succinate-semialdehyde dehydrogenase, mitochondrial (Aldh5a1) (Mus musculus (Mouse)).